The following is a 392-amino-acid chain: Homoserine O-acetyltransferase (392 aa).

The 305-residue stretch at 52–356 (NVVVVLHALT…ICGHDGFLVE (305 aa)) folds into the AB hydrolase-1 domain. The Nucleophile role is filled by Ser-157. Residue Arg-227 coordinates substrate. Catalysis depends on residues Asp-320 and His-350. Asp-351 lines the substrate pocket. The disordered stretch occupies residues 373–392 (SQSAGPGGAGPGSRKGTTRR).

Belongs to the AB hydrolase superfamily. MetX family. As to quaternary structure, homodimer.

The protein localises to the cytoplasm. It carries out the reaction L-homoserine + acetyl-CoA = O-acetyl-L-homoserine + CoA. It participates in amino-acid biosynthesis; L-methionine biosynthesis via de novo pathway; O-acetyl-L-homoserine from L-homoserine: step 1/1. In terms of biological role, transfers an acetyl group from acetyl-CoA to L-homoserine, forming acetyl-L-homoserine. The polypeptide is Homoserine O-acetyltransferase (Mycolicibacterium paratuberculosis (strain ATCC BAA-968 / K-10) (Mycobacterium paratuberculosis)).